Reading from the N-terminus, the 348-residue chain is MRDTMLDERTKKVLYAVVESYIEKPEPVGSRYIMKKYGFDVCSATIRNIMSDLEDAGFLSQPHTSAGRVPTDKAYRFYVDYIFQSELFSQSLEIKRVIENLTKKLRKLRNNMNSLFLETTQSLSQATRYLGLALLPATEKTALHRVDFIKFKDDLVIAVVVNDKGIVKNKIIKVYPEITQKELNSLADFVNRNYHGKTIDEIRDDLIVRIKKEKIFWDRLISKILKMCQEALYFSREDVYVSGFYHIMHLPDFSDIEKLREVAKTIQDRHLLLKLFENISEDDEVKVIIGQENPVEEFRSFSIIASPYKEKDKSLGVIALVGPKRMNYQRAIMLVNAFARSLTRTLSD.

Belongs to the HrcA family.

In terms of biological role, negative regulator of class I heat shock genes (grpE-dnaK-dnaJ and groELS operons). Prevents heat-shock induction of these operons. The sequence is that of Heat-inducible transcription repressor HrcA from Thermodesulfovibrio yellowstonii (strain ATCC 51303 / DSM 11347 / YP87).